Consider the following 578-residue polypeptide: Avenacosidase 2 (578 aa).

A chloroplast-targeting transit peptide spans 1-57 (MALLCSALSNSTHPSFRSHIAGANSENLWHLSAHPAQKSKRRCNLTLSSRAAARISS). A beta-D-glucoside contacts are provided by residues Gln89, His193, and 238-239 (NE). The active-site Proton donor is Glu239. Cysteines 258 and 264 form a disulfide. A beta-D-glucoside contacts are provided by residues Tyr381, Glu454, Trp504, 511 to 512 (EW), and Phe520. Catalysis depends on Glu454, which acts as the Nucleophile.

The protein belongs to the glycosyl hydrolase 1 family. Heteromultimer with P60A in a 1:1 stoichiometry. Aggregates to form the fibrillar stromacentre.

It localises to the plastid. It is found in the chloroplast stroma. The catalysed reaction is avenacoside B + H2O = 26-desgluco-avenacoside B + D-glucose. In terms of biological role, beta-glucosidase acting as a preformed defense system. Hydrolyzes the bisdesmosides avenacosides A and B to 26-desgluco-avenacosides exhibiting fungicidal activity. Can use beta-fucoside &gt; beta-glucoside &gt; beta-galactoside &gt; beta-xyloside as substrates, but not alpha-glycosides, beta-thioglucosides and disaccharides. This chain is Avenacosidase 2 (P60B), found in Avena sativa (Oat).